The chain runs to 640 residues: Insulin-like growth factor 1 receptor (640 aa).

2 Fibronectin type-III domains span residues 5-101 and 107-200; these read VPRP…TMPA and IPGP…VQAK. Over 14 to 208 the chain is Extracellular; that stretch reads EVMQIANTTM…AKTTYENFIH (195 aa). Asn20, Asn29, Asn37, Asn173, and Asn186 each carry an N-linked (GlcNAc...) asparagine glycan. A helical transmembrane segment spans residues 209-232; that stretch reads LMIALPIAVLLIVGGLVIMLYVFH. Residues 233–640 lie on the Cytoplasmic side of the membrane; sequence RKRNSSRLGN…ALPLPQSSTC (408 aa). The IRS1- and SHC1-binding signature appears at 250 to 253; the sequence is NPEY. Tyr253 bears the Phosphotyrosine mark. Positions 272–547 constitute a Protein kinase domain; it reads ITMSRELGQG…SVKDEMEAGF (276 aa). Residues 278-286 and Lys306 contribute to the ATP site; that span reads LGQGSFGMV. The active-site Proton acceptor is Asp408. 3 positions are modified to phosphotyrosine; by autocatalysis: Tyr434, Tyr438, and Tyr439. Glycyl lysine isopeptide (Lys-Gly) (interchain with G-Cter in ubiquitin) cross-links involve residues Lys441 and Lys444. A Phosphoserine; by GSK3-beta modification is found at Ser551. Ser555 bears the Phosphoserine mark. Residues 555–640 form a disordered region; it reads SEENKPPEPE…ALPLPQSSTC (86 aa). Over residues 563 to 572 the composition is skewed to acidic residues; sequence PEELDLEPEN. Positions 573–589 are enriched in low complexity; sequence MESVPLDPSASSASLPL. Residues 590 to 599 show a composition bias toward basic and acidic residues; it reads PDRHSGHKAE.

It belongs to the protein kinase superfamily. Tyr protein kinase family. Insulin receptor subfamily. Tetramer of 2 alpha and 2 beta chains linked by disulfide bonds. The alpha chains contribute to the formation of the ligand-binding domain, while the beta chain carries the kinase domain. Interacts with PIK3R1 and with the PTB/PID domains of IRS1 and SHC1 in vitro when autophosphorylated on tyrosine residues. Forms a hybrid receptor with INSR, the hybrid is a tetramer consisting of 1 alpha chain and 1 beta chain of INSR and 1 alpha chain and 1 beta chain of IGF1R. Interacts with ARRB1 and ARRB2. Interacts with GRB10. Interacts with RACK1. Interacts with SOCS1, SOCS2 and SOCS3. Interacts with 14-3-3 proteins. Interacts with NMD2. Interacts with MAP3K5. Interacts with STAT3. Interacts (nascent precursor form) with ZFAND2B. Autophosphorylated on tyrosine residues in response to ligand binding. Autophosphorylation occurs in trans, i.e. one subunit of the dimeric receptor phosphorylates tyrosine residues on the other subunit. Autophosphorylation occurs in a sequential manner; Tyr-438 is predominantly phosphorylated first, followed by phosphorylation of Tyr-434 and Tyr-439. While every single phosphorylation increases kinase activity, all three tyrosine residues in the kinase activation loop (Tyr-438, Tyr-434 and Tyr-439) have to be phosphorylated for optimal activity. Can be autophosphorylated at additional tyrosine residues (in vitro). Autophosphorylated is followed by phosphorylation of juxtamembrane tyrosines and C-terminal serines. May also be phosphorylated at Tyr-434 and Tyr-439 by mTORC2. Phosphorylation of Tyr-253 is required for IRS1- and SHC1-binding. Phosphorylation of Ser-551 by GSK-3beta restrains kinase activity and promotes cell surface expression, it requires a priming phosphorylation at Ser-555. Dephosphorylated by PTPN1. In terms of processing, polyubiquitinated at Lys-441 and Lys-444 through both 'Lys-48' and 'Lys-29' linkages, promoting receptor endocytosis and subsequent degradation by the proteasome. Ubiquitination is facilitated by pre-existing phosphorylation. Post-translationally, sumoylated with SUMO1. Controlled by regulated intramembrane proteolysis (RIP). Undergoes metalloprotease-dependent constitutive ectodomain shedding to produce a membrane-anchored 52 kDa C-Terminal fragment which is further processed by presenilin gamma-secretase to yield an intracellular 50 kDa fragment.

Its subcellular location is the cell membrane. It carries out the reaction L-tyrosyl-[protein] + ATP = O-phospho-L-tyrosyl-[protein] + ADP + H(+). Its activity is regulated as follows. Activated by autophosphorylation at Tyr-434, Tyr-438 and Tyr-439 on the kinase activation loop; phosphorylation at all three tyrosine residues is required for optimal kinase activity. Inhibited by MSC1609119A-1, BMS-754807, PQIP, benzimidazole pyridinone, isoquinolinedione, bis-azaindole, 3-cyanoquinoline, 2,4-bis-arylamino-1,3-pyrimidine, pyrrolopyrimidine, pyrrole-5-carboxaldehyde, picropodophyllin (PPP), tyrphostin derivatives. While most inhibitors bind to the ATP binding pocket, MSC1609119A-1 functions as allosteric inhibitor and binds close to the DFG motif and the activation loop. In terms of biological role, receptor tyrosine kinase which mediates actions of insulin-like growth factor 1 (IGF1). Binds IGF1 with high affinity and IGF2 and insulin (INS) with a lower affinity. The activated IGF1R is involved in cell growth and survival control. IGF1R is crucial for tumor transformation and survival of malignant cell. Ligand binding activates the receptor kinase, leading to receptor autophosphorylation, and tyrosines phosphorylation of multiple substrates, that function as signaling adapter proteins including, the insulin-receptor substrates (IRS1/2), Shc and 14-3-3 proteins. Phosphorylation of IRSs proteins lead to the activation of two main signaling pathways: the PI3K-AKT/PKB pathway and the Ras-MAPK pathway. The result of activating the MAPK pathway is increased cellular proliferation, whereas activating the PI3K pathway inhibits apoptosis and stimulates protein synthesis. Phosphorylated IRS1 can activate the 85 kDa regulatory subunit of PI3K (PIK3R1), leading to activation of several downstream substrates, including protein AKT/PKB. AKT phosphorylation, in turn, enhances protein synthesis through mTOR activation and triggers the antiapoptotic effects of IGFIR through phosphorylation and inactivation of BAD. In parallel to PI3K-driven signaling, recruitment of Grb2/SOS by phosphorylated IRS1 or Shc leads to recruitment of Ras and activation of the ras-MAPK pathway. In addition to these two main signaling pathways IGF1R signals also through the Janus kinase/signal transducer and activator of transcription pathway (JAK/STAT). Phosphorylation of JAK proteins can lead to phosphorylation/activation of signal transducers and activators of transcription (STAT) proteins. In particular activation of STAT3, may be essential for the transforming activity of IGF1R. The JAK/STAT pathway activates gene transcription and may be responsible for the transforming activity. JNK kinases can also be activated by the IGF1R. IGF1 exerts inhibiting activities on JNK activation via phosphorylation and inhibition of MAP3K5/ASK1, which is able to directly associate with the IGF1R. When present in a hybrid receptor with INSR, binds IGF1. The polypeptide is Insulin-like growth factor 1 receptor (IGF1R) (Bos taurus (Bovine)).